The following is a 449-amino-acid chain: Clusterin (449 aa).

The N-terminal stretch at 1-22 (MMKTLLLFVGLLLTWESGQVLG) is a signal peptide. Positions 78 to 81 (KKKK) match the Nuclear localization signal motif. Asn-86 is a glycosylation site (N-linked (GlcNAc...) (complex) asparagine). Intrachain disulfides connect Cys-102–Cys-313, Cys-113–Cys-305, Cys-116–Cys-302, Cys-121–Cys-295, and Cys-129–Cys-285. An N-linked (GlcNAc...) asparagine glycan is attached at Asn-103. Ser-133 carries the phosphoserine modification. 3 N-linked (GlcNAc...) asparagine glycosylation sites follow: Asn-145, Asn-291, and Asn-354. A glycan (N-linked (GlcNAc...) (complex) asparagine) is linked at Asn-374. Ser-396 carries the post-translational modification Phosphoserine. A Nuclear localization signal motif is present at residues 443-447 (RKKHR).

This sequence belongs to the clusterin family. Antiparallel disulfide-linked heterodimer of an alpha chain and a beta chain. Self-associates and forms higher oligomers. Interacts with a broad range of misfolded proteins, including APP, APOC2 and LYZ. Slightly acidic pH promotes interaction with misfolded proteins. Forms high-molecular weight oligomers upon interaction with misfolded proteins. Interacts with APOA1, LRP2, CLUAP1 and PON1. Interacts with the complement membrane attack complex. Interacts (via alpha chain) with XRCC6. Interacts with SYVN1, COMMD1, BTRC, CUL1 and with ubiquitin and SCF (SKP1-CUL1-F-box protein) E3 ubiquitin-protein ligase complexes. Interacts (via alpha chain) with BAX in stressed cells, where BAX undergoes a conformation change leading to association with the mitochondrial membrane. Does not interact with BAX in unstressed cells. Found in a complex with LTF, CLU, EPPIN and SEMG1. Interacts (immaturely glycosylated pre-secreted form) with HSPA5; this interaction promotes CLU stability and facilitates stress-induced CLU retrotranslocation from the secretory pathway to the mitochondria, thereby reducing stress-induced apoptosis by stabilizing mitochondrial membrane integrity. Interacts (isoform 4) with BCL2L1; this interaction releases and activates BAX and promotes cell death. Interacts with TGFBR2 and ACVR1. Interacts (secreted form) with STMN3; this interaction may act as an important modulator during neuronal differentiation. Interacts with VLDLR and LRP8. In terms of processing, proteolytically cleaved on its way through the secretory system, probably within the Golgi lumen. Proteolytic cleavage is not necessary for its chaperone activity. All non-secreted forms are not proteolytically cleaved. Chaperone activity of uncleaved forms is dependent on a non-reducing environment. Polyubiquitinated, leading to proteasomal degradation. Under cellular stress, the intracellular level of cleaved form is reduced due to proteasomal degradation. Post-translationally, extensively glycosylated with sulfated N-linked carbohydrates. About 30% of the protein mass is comprised of complex N-linked carbohydrate. Endoplasmic reticulum (ER) stress induces changes in glycosylation status and increases level of hypoglycosylated forms. Core carbohydrates are essential for chaperone activity. Non-secreted forms are hypoglycosylated or unglycosylated. Detected in blood plasma, cerebrospinal fluid, milk, seminal plasma and colon mucosa. Detected in the germinal center of colon lymphoid nodules and in colon parasympathetic ganglia of the Auerbach plexus (at protein level). Ubiquitous. Detected in brain, testis, ovary, liver and pancreas, and at lower levels in kidney, heart, spleen and lung.

It is found in the secreted. The protein localises to the cytoplasm. Its subcellular location is the nucleus. It localises to the mitochondrion membrane. The protein resides in the cytosol. It is found in the microsome. The protein localises to the endoplasmic reticulum. Its subcellular location is the mitochondrion. It localises to the perinuclear region. The protein resides in the cytoplasmic vesicle. It is found in the secretory vesicle. The protein localises to the chromaffin granule. Functions as extracellular chaperone that prevents aggregation of non native proteins. Prevents stress-induced aggregation of blood plasma proteins. Inhibits formation of amyloid fibrils by APP, APOC2, B2M, CALCA, CSN3, SNCA and aggregation-prone LYZ variants (in vitro). Does not require ATP. Maintains partially unfolded proteins in a state appropriate for subsequent refolding by other chaperones, such as HSPA8/HSC70. Does not refold proteins by itself. Binding to cell surface receptors triggers internalization of the chaperone-client complex and subsequent lysosomal or proteasomal degradation. Protects cells against apoptosis and against cytolysis by complement: inhibits assembly of the complement membrane attack complex (MAC) by preventing polymerization of C9 pore component of the MAC complex. Intracellular forms interact with ubiquitin and SCF (SKP1-CUL1-F-box protein) E3 ubiquitin-protein ligase complexes and promote the ubiquitination and subsequent proteasomal degradation of target proteins. Promotes proteasomal degradation of COMMD1 and IKBKB. Modulates NF-kappa-B transcriptional activity. A mitochondrial form suppresses BAX-dependent release of cytochrome c into the cytoplasm and inhibit apoptosis. Plays a role in the regulation of cell proliferation. An intracellular form suppresses stress-induced apoptosis by stabilizing mitochondrial membrane integrity through interaction with HSPA5. Secreted form does not affect caspase or BAX-mediated intrinsic apoptosis and TNF-induced NF-kappa-B-activity. Secreted form act as an important modulator during neuronal differentiation through interaction with STMN3. Plays a role in the clearance of immune complexes that arise during cell injury. In terms of biological role, does not affect caspase or BAX-mediated intrinsic apoptosis and TNF-induced NF-kappa-B-activity. Its function is as follows. Does not affect caspase or BAX-mediated intrinsic apoptosis and TNF-induced NF-kappa-B-activity. Promotes cell death through interaction with BCL2L1 that releases and activates BAX. The chain is Clusterin from Homo sapiens (Human).